Reading from the N-terminus, the 211-residue chain is MYQPDFPPVPFRLGLYPVVDSVQWIERLLDAGVRTLQLRIKDRRNEEVEADVVAAIALGRRYNARLFINDYWRLAIKHQAYGVHLGQEDLQATDLNAIRAAGLRLGVSTHDDMEIDVALAARPSYIALGHVFPTQTKQMPSAPQGLEQLARHVERLADYPTVAIGGISLARAPAVIATGVGSIAVVSAITQAADWRLATAQLLEIAGVGDE.

4-amino-2-methyl-5-(diphosphooxymethyl)pyrimidine-binding positions include 37-41 (QLRIK) and N69. The Mg(2+) site is built by D70 and D89. S108 serves as a coordination point for 4-amino-2-methyl-5-(diphosphooxymethyl)pyrimidine. 134-136 (TQT) contributes to the 2-[(2R,5Z)-2-carboxy-4-methylthiazol-5(2H)-ylidene]ethyl phosphate binding site. Residue K137 coordinates 4-amino-2-methyl-5-(diphosphooxymethyl)pyrimidine. 2-[(2R,5Z)-2-carboxy-4-methylthiazol-5(2H)-ylidene]ethyl phosphate contacts are provided by residues G166 and 186–187 (VS).

It belongs to the thiamine-phosphate synthase family. Requires Mg(2+) as cofactor.

It carries out the reaction 2-[(2R,5Z)-2-carboxy-4-methylthiazol-5(2H)-ylidene]ethyl phosphate + 4-amino-2-methyl-5-(diphosphooxymethyl)pyrimidine + 2 H(+) = thiamine phosphate + CO2 + diphosphate. It catalyses the reaction 2-(2-carboxy-4-methylthiazol-5-yl)ethyl phosphate + 4-amino-2-methyl-5-(diphosphooxymethyl)pyrimidine + 2 H(+) = thiamine phosphate + CO2 + diphosphate. The enzyme catalyses 4-methyl-5-(2-phosphooxyethyl)-thiazole + 4-amino-2-methyl-5-(diphosphooxymethyl)pyrimidine + H(+) = thiamine phosphate + diphosphate. It functions in the pathway cofactor biosynthesis; thiamine diphosphate biosynthesis; thiamine phosphate from 4-amino-2-methyl-5-diphosphomethylpyrimidine and 4-methyl-5-(2-phosphoethyl)-thiazole: step 1/1. Condenses 4-methyl-5-(beta-hydroxyethyl)thiazole monophosphate (THZ-P) and 2-methyl-4-amino-5-hydroxymethyl pyrimidine pyrophosphate (HMP-PP) to form thiamine monophosphate (TMP). This chain is Thiamine-phosphate synthase, found in Shigella sonnei (strain Ss046).